The following is a 187-amino-acid chain: High affinity copper uptake protein 1 (187 aa).

Residues 1 to 65 (MRMNHMEMHH…SSLVINTPGE (65 aa)) are Extracellular-facing. The Bis-His motif motif lies at 9 to 10 (HH). Asn19 carries an N-linked (GlcNAc...) asparagine glycan. An O-linked (GalNAc...) threonine glycan is attached at Thr30. A helical transmembrane segment spans residues 66 to 86 (MAGAFVAVFLLAMFYEGLKIA). Residues 87–129 (REGLLRKSQVSIRYNSMPVPGPNGTILMETHKTVGQQMLSFPH) lie on the Cytoplasmic side of the membrane. The residue at position 111 (Thr111) is a Phosphothreonine. Residues 130 to 150 (LLQTVLHIIQVVISYFLMLIF) form a helical membrane-spanning segment. Residues 151–153 (MTY) are Extracellular-facing. A helical membrane pass occupies residues 154 to 174 (NGYLCIAVAAGAGTGYFLFSW). Residues 175–187 (KKAVVVDITEHCH) lie on the Cytoplasmic side of the membrane. At Cys186 the chain carries Cysteine sulfenic acid (-SOH).

Belongs to the copper transporter (Ctr) (TC 1.A.56) family. SLC31A subfamily. In terms of assembly, homotrimer; is stabilized by cisplatin via interactions between cisplatin and the methionine-rich clusters, and could be crucial for the copper(2+) reduction process and copper(1+) stabilization. Heterotrimer between SLC31A1, CCS and SOD1; this heterotrimer is copper(1+)-mediated and its maintenance is regulated through SOD1 activation. Interacts with KDR; this interaction is induced upon VEGFA stimulation leading to SLC31A1 and KDR subsequent co-internalization to early endosomes, thereby activating KDR downstream signaling in endothelial cells. Interacts (via C-terminal domain) with ATOX1 (via dimer form); this interaction improves ATOX1 stability and controls intracellular copper(1+) levels. Interacts with SLC31A2; this interaction stabilizes SLC31A2 and protects its from ubiquitination and degradation. Interacts (via C-terminal domain) with CCS; this interaction is copper(1+)-mediated. O-Glycosylation at Thr-30 protects from proteolytic cleavage in the N-terminal extracellular domain. In terms of processing, proteolytic cleavage, leading to a truncated form, is facilitated by SLC31A2 and initiated preferentially by CTSL and to a minor extend by CTSB in endolysosomal compartments. A post-CTSL/cathepsin L processing occurs to yield to the fully truncated form. Post-translationally, sulfenylated at Cys-186 after stimulation with VEGFA, which induces SLC31A1-KDR disulfide bond formation and their co-internalization to early endosomes, driving to a sustained VEGFR2 signaling.

The protein resides in the cell membrane. It localises to the early endosome membrane. The protein localises to the recycling endosome membrane. It is found in the apical cell membrane. Its subcellular location is the late endosome membrane. The protein resides in the basolateral cell membrane. It catalyses the reaction Cu(+)(out) = Cu(+)(in). The enzyme catalyses Ag(+)(out) = Ag(+)(in). With respect to regulation, copper uptake is inhibited by cold temperature, silver and zinc ions. Platinum-containing chemotherapeutic agents uptake is inhibited by cold temperature and copper. In terms of biological role, uniporter that mediates the transport of copper(1+) from the extracellular space to the cytoplasm, across the plasma membrane. Then, delivers directly copper(1+) to specific chaperone such as ATOX1, via a copper(1+)- mediated transient interaction between the C-terminal domain and a copper(1+) chaperone, thus controlling intracellular copper(1+) levels. May function in copper(1+) import from the apical membrane thus may drive intestinal copper absorption. The copper(1+) transport mechanism is sodium-independent, saturable and of high-affinity. Also mediates the uptake of silver(1+). May function in the influx of the platinum-containing chemotherapeutic agents. The platinum-containing chemotherapeutic agents uptake is saturable. Also participates in the first step of copper(2+) acquisition by cells through a direct transfer of copper(2+) from copper(2+) carriers in blood, such as ALB to the N-terminal domain of SLC31A1, leading to copper(2+) reduction and probably followed by copper(1+) stabilization. In addition, functions as a redox sensor to promote angiogenesis in endothelial cells, in a copper(1+) transport independent manner, by transmitting the VEGF-induced ROS signal through a sulfenylation at Cys-189 leading to a subsequent disulfide bond formation between SLC31A1 and KDR. The SLC31A1-KDR complex is then co-internalized to early endosomes, driving a sustained VEGFR2 signaling. Mobilizes copper(1+) out of the endosomal compartment, making copper(1+) available for export out of the cells. In Rattus norvegicus (Rat), this protein is High affinity copper uptake protein 1.